The following is a 185-amino-acid chain: Prorelaxin 1 (185 aa).

A signal peptide spans 1–22; the sequence is MSSRFLLQLLGFWLLLSQPCRT. 3 disulfide bridges follow: Cys-36-Cys-171, Cys-48-Cys-185, and Cys-170-Cys-175. Residues 58–156 constitute a propeptide, connecting peptide; it reads SQEEPALLAR…LKYLQSDTHS (99 aa). Residues 135–161 are disordered; the sequence is RLGEAEDGSPPGLKYLQSDTHSRKKRE.

This sequence belongs to the insulin family. In terms of assembly, heterodimer of a B chain and an A chain linked by two disulfide bonds.

Its subcellular location is the secreted. Its function is as follows. Relaxin is an ovarian hormone that acts with estrogen to produce dilatation of the birth canal in many mammals. The polypeptide is Prorelaxin 1 (Rln1) (Mus musculus (Mouse)).